Reading from the N-terminus, the 321-residue chain is AA9 family lytic polysaccharide monooxygenase C (321 aa).

The first 18 residues, 1-18 (MKLQLIIPFSFLISYVSA), serve as a signal peptide directing secretion. Residue H19 coordinates Cu(2+). N-linked (GlcNAc...) asparagine glycosylation occurs at N33. Disulfide bonds link C57/C191 and C161/C242. H103 lines the Cu(2+) pocket. Residues H177 and Q186 each coordinate O2. Y188 is a Cu(2+) binding site. N-linked (GlcNAc...) asparagine glycosylation is present at N195. One can recognise a CBM1 domain in the interval 283-319 (GTAAIYAQCGGQGWTGATVCASGSKCVVSSAFYSQCL).

It belongs to the polysaccharide monooxygenase AA9 family. Cu(2+) serves as cofactor.

The protein resides in the secreted. It carries out the reaction [(1-&gt;4)-beta-D-glucosyl]n+m + reduced acceptor + O2 = 4-dehydro-beta-D-glucosyl-[(1-&gt;4)-beta-D-glucosyl]n-1 + [(1-&gt;4)-beta-D-glucosyl]m + acceptor + H2O.. Major lytic polysaccharide monooxygenase (LPMO) that depolymerizes crystalline and amorphous polysaccharides via the oxidation of scissile alpha- or beta-(1-4)-glycosidic bonds, yielding C1 and C4 oxidation products. Catalysis by LPMOs requires the reduction of the active-site copper from Cu(II) to Cu(I) by a reducing agent and H(2)O(2) or O(2) as a cosubstrate. In Botryotinia fuckeliana (strain B05.10) (Noble rot fungus), this protein is AA9 family lytic polysaccharide monooxygenase C.